The following is a 299-amino-acid chain: Lathosterol oxidase (299 aa).

Helical transmembrane passes span 32-52 (ISLLIVTNVGAYILYFFCATL), 79-99 (FTVQALPWISILTVALFLLEI), and 117-137 (FELVVSIISFLFFTDMFIYWI). The Fatty acid hydroxylase domain maps to 124 to 252 (ISFLFFTDMF…YFTLWDRIGG (129 aa)). Positions 138–143 (HRGLHH) match the Histidine box-1 motif. Positions 151–155 (HKPHH) match the Histidine box-2 motif. Residues 186-206 (IFPLHKVVYLSLYILVNIWTI) form a helical membrane-spanning segment. The Histidine box-3 signature appears at 228-233 (HHTDHH). At S253 the chain carries Phosphoserine. A disordered region spans residues 274 to 299 (EGKRSSHSGNGCKNEKLFNGEFTKTE). The segment covering 286–299 (KNEKLFNGEFTKTE) has biased composition (basic and acidic residues).

Belongs to the sterol desaturase family. It depends on Fe cation as a cofactor.

The protein resides in the endoplasmic reticulum membrane. It carries out the reaction a Delta(7)-sterol + 2 Fe(II)-[cytochrome b5] + O2 + 2 H(+) = a Delta(5),Delta(7)-sterol + 2 Fe(III)-[cytochrome b5] + 2 H2O. It catalyses the reaction lathosterol + 2 Fe(II)-[cytochrome b5] + O2 + 2 H(+) = 7-dehydrocholesterol + 2 Fe(III)-[cytochrome b5] + 2 H2O. The catalysed reaction is 5alpha-cholesta-7,24-dien-3beta-ol + 2 Fe(II)-[cytochrome b5] + O2 + 2 H(+) = 7-dehydrodesmosterol + 2 Fe(III)-[cytochrome b5] + 2 H2O. It functions in the pathway steroid biosynthesis; cholesterol biosynthesis. Functionally, catalyzes the penultimate step of the biosynthesis of cholesterol, the dehydrogenation of lathosterol into 7-dehydrocholesterol (7-DHC). Cholesterol is the major sterol component in mammalian membranes and a precursor for bile acid and steroid hormone synthesis. In addition to its essential role in cholesterol biosynthesis, it also indirectly regulates ferroptosis through the production of 7-DHC. By diverting the spread of damage caused by peroxyl radicals from the phospholipid components to its sterol nucleus, 7-DHC prevents this form of cell death. The sequence is that of Lathosterol oxidase from Homo sapiens (Human).